The sequence spans 304 residues: Ornithine carbamoyltransferase (304 aa).

Residues 47–50 (STRT), Arg-98, and 125–128 (HPCQ) contribute to the carbamoyl phosphate site. Residues Asn-156, Asp-221, and 225-226 (SM) contribute to the L-ornithine site. Carbamoyl phosphate-binding positions include 262-263 (CL) and Arg-290.

Belongs to the aspartate/ornithine carbamoyltransferase superfamily. OTCase family.

Its subcellular location is the cytoplasm. The enzyme catalyses carbamoyl phosphate + L-ornithine = L-citrulline + phosphate + H(+). The protein operates within amino-acid biosynthesis; L-arginine biosynthesis; L-arginine from L-ornithine and carbamoyl phosphate: step 1/3. Its function is as follows. Reversibly catalyzes the transfer of the carbamoyl group from carbamoyl phosphate (CP) to the N(epsilon) atom of ornithine (ORN) to produce L-citrulline. This Methanococcus maripaludis (strain C7 / ATCC BAA-1331) protein is Ornithine carbamoyltransferase.